Here is a 495-residue protein sequence, read N- to C-terminus: Adenosylhomocysteinase (495 aa).

Positions 71, 156, and 218 each coordinate substrate. NAD(+) is bound at residue T219–T221. Substrate-binding residues include K248 and D252. NAD(+)-binding positions include N253, G282–G287, E305, N340, I361–H363, and N409.

The protein belongs to the adenosylhomocysteinase family. Requires NAD(+) as cofactor.

It is found in the cytoplasm. It carries out the reaction S-adenosyl-L-homocysteine + H2O = L-homocysteine + adenosine. It participates in amino-acid biosynthesis; L-homocysteine biosynthesis; L-homocysteine from S-adenosyl-L-homocysteine: step 1/1. Its function is as follows. May play a key role in the regulation of the intracellular concentration of adenosylhomocysteine. In Mycobacterium tuberculosis (strain ATCC 25177 / H37Ra), this protein is Adenosylhomocysteinase.